The sequence spans 197 residues: Peptide deformylase (197 aa).

Fe cation is bound by residues Cys106 and His148. The active site involves Glu149. His152 contacts Fe cation.

It belongs to the polypeptide deformylase family. Fe(2+) is required as a cofactor.

The catalysed reaction is N-terminal N-formyl-L-methionyl-[peptide] + H2O = N-terminal L-methionyl-[peptide] + formate. In terms of biological role, removes the formyl group from the N-terminal Met of newly synthesized proteins. Requires at least a dipeptide for an efficient rate of reaction. N-terminal L-methionine is a prerequisite for activity but the enzyme has broad specificity at other positions. In Mycobacterium bovis (strain ATCC BAA-935 / AF2122/97), this protein is Peptide deformylase.